A 165-amino-acid polypeptide reads, in one-letter code: LIM domain transcription factor LMO4 (165 aa).

LIM zinc-binding domains follow at residues 23–83 (CAGC…LFGN) and 87–147 (CSAC…ALIN).

As to quaternary structure, interacts strongly with LDBS. Interacts with LDB2 and LDB1. Interaction with complexes consisting of at least LDB1 and LHX3 acts to disassemble the complex; may preferentially disassemble LDB1-LHX3 complexes rather than complexes consisting of LDB1, LHX3 and ISL1. Interacts (via the LIM zinc-binding domain 1) with RBBP8. Interacts with both RPPB8 and LDB1 through the same face and cannot bind to both proteins simultaneously. Interacts with BRCA1 (via the BRCT domains); the interaction represses BRCA1 transcriptional activity. Interacts with DEAF1; LMO4 blocks export from nucleus.

Transcription cofactor. Plays a role in establishing motor neuron identity, in concert with MNX1, acting, at least in part, to disrupt LDB1-LHX3 complexes thereby negatively modulating interneuron genes in motor neurons. This Bos taurus (Bovine) protein is LIM domain transcription factor LMO4 (LMO4).